The chain runs to 154 residues: Protein AE7-like 1 (154 aa).

Belongs to the MIP18 family.

Functionally, may play a role in chromosome segregation through establishment of sister chromatid cohesion. Unable to complement ae7 mutants, and thus probably not involved in the cytosolic iron-sulfur assembly (CIA) pathway. This is Protein AE7-like 1 from Arabidopsis thaliana (Mouse-ear cress).